Consider the following 144-residue polypeptide: Protein cornichon homolog 1 (144 aa).

At 1–10 the chain is on the cytoplasmic side; it reads MAFTFAAFCY. A helical transmembrane segment spans residues 11–31; that stretch reads MLALLLTAALIFFAIWHIIAF. At 32 to 56 the chain is on the lumenal side; that stretch reads DELKTDYKNPIDQCNTLNPLVLPEY. Residues 57-77 form a helical membrane-spanning segment; it reads LIHAFFCVMFLCAAEWLTLGL. Residues 78 to 122 lie on the Cytoplasmic side of the membrane; sequence NMPLLAYHIWRYMSRPVMSGPGLYDPTTIMNADILAYCQKEGWCK. Residues 123–143 traverse the membrane as a helical segment; that stretch reads LAFYLLAFFYYLYGMIYVLVS. Position 144 (Ser144) is a topological domain, lumenal.

The protein belongs to the cornichon family. In terms of assembly, interacts with AREG immature precursor and with immature TGFA, i.e. with a prosegment and lacking full N-glycosylation, but not with the fully N-glycosylated form. In the Golgi apparatus, may form a complex with GORASP55 and transmembrane TGFA.

Its subcellular location is the endoplasmic reticulum membrane. The protein resides in the golgi apparatus membrane. Its function is as follows. Involved in the selective transport and maturation of TGF-alpha family proteins. The chain is Protein cornichon homolog 1 (CNIH1) from Bos taurus (Bovine).